A 569-amino-acid polypeptide reads, in one-letter code: Cytochrome P450 monooxygenase abl1 (569 aa).

Heme is bound at residue Cys-464.

Belongs to the cytochrome P450 family. Heme serves as cofactor.

It functions in the pathway hormone biosynthesis. Cytochrome P450 monooxygenase; part of the gene cluster that mediates the biosynthesis of abscisic acid (ABA), a phytohormone that acts antagonistically toward salicylic acid (SA), jasmonic acid (JA) and ethylene (ETH) signaling, to impede plant defense responses. The first step of the pathway catalyzes the reaction from farnesyl diphosphate to alpha-ionylideneethane performed by the alpha-ionylideneethane synthase abl3 via a three-step reaction mechanism involving 2 neutral intermediates, beta-farnesene and allofarnesene. The cytochrome P450 monooxygenase abl1 might then be involved in the conversion of alpha-ionylideneethane to alpha-ionylideneacetic acid. Alpha-ionylideneacetic acid is further converted to abscisic acid in 2 steps involving the cytochrome P450 monooxygenase abl2 and the short-chain dehydrogenase/reductase abl4, via the intermediates 1'-deoxy-ABA or 1',4'-trans-diol-ABA, depending on the order of action of these 2 enzymes. Abl2 is responsible for the hydroxylation of carbon atom C-1' and abl4 might be involved in the oxidation of the C-4' carbon atom. This Leptosphaeria maculans (strain JN3 / isolate v23.1.3 / race Av1-4-5-6-7-8) (Blackleg fungus) protein is Cytochrome P450 monooxygenase abl1.